The following is a 308-amino-acid chain: Maspardin (308 aa).

The region spanning 87 to 159 (FCDGFRKLLD…NSFWLMPAFM (73 aa)) is the AB hydrolase-1 domain. S304 carries the post-translational modification Phosphoserine.

Belongs to the AB hydrolase superfamily. Interacts with CD4. Interacts with ALDH16A1.

It localises to the cytoplasm. May play a role as a negative regulatory factor in CD4-dependent T-cell activation. This chain is Maspardin (SPG21), found in Pongo abelii (Sumatran orangutan).